Here is a 236-residue protein sequence, read N- to C-terminus: 3-oxoacyl-[acyl-carrier-protein] reductase (236 aa).

Met-1 is modified (N-acetylmethionine). NADP(+)-binding positions include 11–14 (SRGI) and 34–35 (RN). Position 40 is an N6-acetyllysine (Lys-40). NADP(+) is bound at residue 83–85 (AAG). Lys-96 carries the post-translational modification N6-acetyllysine. Residue Ser-134 participates in substrate binding. Residues Tyr-147, Lys-151, and 180–182 (IHT) each bind NADP(+). Catalysis depends on Tyr-147, which acts as the Proton acceptor. At Lys-194 the chain carries N6-acetyllysine.

This sequence belongs to the short-chain dehydrogenases/reductases (SDR) family. In terms of assembly, homotetramer (in vitro). Heterotetramer with HSD17B8; contains two molecules each of HSD17B8 and CBR4. Does not form homotetramers when HSD17B8 is coexpressed, only heterotetramers (in vitro).

It localises to the mitochondrion matrix. The catalysed reaction is a (3R)-hydroxyacyl-[ACP] + NADP(+) = a 3-oxoacyl-[ACP] + NADPH + H(+). It catalyses the reaction a quinone + NADPH + H(+) = a quinol + NADP(+). The protein operates within lipid metabolism; fatty acid biosynthesis. Functionally, component of the heterotetramer complex KAR (3-ketoacyl-[acyl carrier protein] reductase or 3-ketoacyl-[ACP] reductase) that forms part of the mitochondrial fatty acid synthase (mtFAS). Beta-subunit of the KAR heterotetramer complex, responsible for the 3-ketoacyl-ACP reductase activity of the mtFAS, reduces 3-oxoacyl-[ACP] to (3R)-hydroxyacyl-[ACP] in a NADPH-dependent manner with no chain length preference, thereby participating in mitochondrial fatty acid biosynthesis. The homotetramer has NADPH-dependent quinone reductase activity (in vitro), hence could play a role in protection against cytotoxicity of exogenous quinones. As a heterotetramer, it can also reduce 9,10-phenanthrenequinone, 1,4-benzoquinone and various other o-quinones and p-quinones (in vitro). This is 3-oxoacyl-[acyl-carrier-protein] reductase (Cbr4) from Rattus norvegicus (Rat).